Reading from the N-terminus, the 142-residue chain is Large ribosomal subunit protein uL13 (142 aa).

It belongs to the universal ribosomal protein uL13 family. Part of the 50S ribosomal subunit.

This protein is one of the early assembly proteins of the 50S ribosomal subunit, although it is not seen to bind rRNA by itself. It is important during the early stages of 50S assembly. This chain is Large ribosomal subunit protein uL13, found in Aeromonas hydrophila subsp. hydrophila (strain ATCC 7966 / DSM 30187 / BCRC 13018 / CCUG 14551 / JCM 1027 / KCTC 2358 / NCIMB 9240 / NCTC 8049).